Consider the following 491-residue polypeptide: Serine/threonine-protein kinase 3/4 (491 aa).

A disordered region spans residues 1–24; it reads MEEVQRRQHPHPRRSLKKLSEDSL. Residues 7-17 are compositionally biased toward basic residues; it reads RQHPHPRRSLK. The Protein kinase domain occupies 32 to 283; sequence FDVLEKLGEG…ATQLLQHPFI (252 aa). ATP is bound by residues 38 to 46 and lysine 61; that span reads LGEGSYGSV. Aspartate 151 acts as the Proton acceptor in catalysis. Phosphothreonine; by autocatalysis is present on threonine 185. The stretch at 292-334 forms a coiled coil; it reads LRDLITDMMEIKLKRQEEQQRDLDQDDEENSEEDDMDSGTMVR. Disordered regions lie at residues 307–394 and 406–435; these read QEEQ…IQQS and EKEN…PQDG. Over residues 315 to 328 the composition is skewed to acidic residues; sequence DQDDEENSEEDDMD. Composition is skewed to polar residues over residues 363–373 and 410–428; these read TLDSQMGTMVI and QANS…SSDN. The region spanning 437–484 is the SARAH domain; it reads FESLKSWSVEELQRRLASLDPTMEQEIEEIRQRYQAKRQPILDAIDAK. Residues 442 to 475 adopt a coiled-coil conformation; it reads SWSVEELQRRLASLDPTMEQEIEEIRQRYQAKRQ.

It belongs to the protein kinase superfamily. STE Ser/Thr protein kinase family. STE20 subfamily. In terms of assembly, homodimer; mediated via the coiled-coil region. The cofactor is Mg(2+). Proteolytically cleaved by caspase-3 during apoptosis at Asp-328 resulting in a 37 kDa form. Proteolytic cleavage results in kinase activation and nuclear translocation of the truncated form (MST1/N).

It localises to the cytoplasm. The protein resides in the nucleus. The enzyme catalyses L-seryl-[protein] + ATP = O-phospho-L-seryl-[protein] + ADP + H(+). The catalysed reaction is L-threonyl-[protein] + ATP = O-phospho-L-threonyl-[protein] + ADP + H(+). Its activity is regulated as follows. Inhibited by the C-terminal non-catalytic region. Activated by caspase-cleavage. Full activation also requires homodimerization and autophosphorylation of Thr-185. Functionally, stress-activated, pro-apoptotic kinase which, following caspase-cleavage, enters the nucleus and induces chromatin condensation followed by internucleosomal DNA fragmentation. Key component of the Hippo signaling pathway which plays a pivotal role in organ size control and tumor suppression by restricting proliferation and promoting apoptosis. The core of this pathway is composed of a kinase cascade wherein stk3/mst2 and stk4/mst1, in complex with its regulatory protein sav1, phosphorylates and activates lats1/2 in complex with its regulatory protein mob1, which in turn phosphorylates and inactivates yap1 oncoprotein and wwtr1/taz. Phosphorylation of yap1 by lats2 inhibits its translocation into the nucleus to regulate cellular genes important for cell proliferation, cell death, and cell migration. Phosphorylates 'Ser-14' of histone H2B (H2BS14ph) during apoptosis. The polypeptide is Serine/threonine-protein kinase 3/4 (STK4) (Squalus acanthias (Spiny dogfish)).